Consider the following 158-residue polypeptide: NAD(P)H-quinone oxidoreductase subunit J, chloroplastic (158 aa).

This sequence belongs to the complex I 30 kDa subunit family. In terms of assembly, NDH is composed of at least 16 different subunits, 5 of which are encoded in the nucleus.

It is found in the plastid. It localises to the chloroplast thylakoid membrane. The enzyme catalyses a plastoquinone + NADH + (n+1) H(+)(in) = a plastoquinol + NAD(+) + n H(+)(out). The catalysed reaction is a plastoquinone + NADPH + (n+1) H(+)(in) = a plastoquinol + NADP(+) + n H(+)(out). NDH shuttles electrons from NAD(P)H:plastoquinone, via FMN and iron-sulfur (Fe-S) centers, to quinones in the photosynthetic chain and possibly in a chloroplast respiratory chain. The immediate electron acceptor for the enzyme in this species is believed to be plastoquinone. Couples the redox reaction to proton translocation, and thus conserves the redox energy in a proton gradient. This chain is NAD(P)H-quinone oxidoreductase subunit J, chloroplastic, found in Fagopyrum esculentum subsp. ancestrale (Wild buckwheat).